The chain runs to 452 residues: Methionine aminopeptidase 2-1 (452 aa).

The disordered stretch occupies residues 1–100 (MAAKVADDVA…VRIDEVFPND (100 aa)). A compositionally biased stretch (acidic residues) spans 37 to 51 (EHDDSDDDNEAEDGA). Basic residues predominate over residues 60 to 73 (KKKKKRKPRKKKKA). His205 serves as a coordination point for substrate. Positions 225, 236, and 305 each coordinate a divalent metal cation. Residue His313 participates in substrate binding. Positions 338 and 433 each coordinate a divalent metal cation.

It belongs to the peptidase M24A family. Methionine aminopeptidase eukaryotic type 2 subfamily. It depends on Co(2+) as a cofactor. Requires Zn(2+) as cofactor. Mn(2+) is required as a cofactor. The cofactor is Fe(2+).

It localises to the cytoplasm. The enzyme catalyses Release of N-terminal amino acids, preferentially methionine, from peptides and arylamides.. Functionally, cotranslationally removes the N-terminal methionine from nascent proteins. The N-terminal methionine is often cleaved when the second residue in the primary sequence is small and uncharged (Met-Ala-, Cys, Gly, Pro, Ser, Thr, or Val). The chain is Methionine aminopeptidase 2-1 from Pyrenophora teres f. teres (strain 0-1) (Barley net blotch fungus).